The sequence spans 481 residues: Xylulose kinase (481 aa).

81–82 lines the substrate pocket; the sequence is QH. Asp-239 acts as the Proton acceptor in catalysis.

Belongs to the FGGY kinase family.

It carries out the reaction D-xylulose + ATP = D-xylulose 5-phosphate + ADP + H(+). Functionally, catalyzes the phosphorylation of D-xylulose to D-xylulose 5-phosphate. The sequence is that of Xylulose kinase from Streptomyces coelicolor (strain ATCC BAA-471 / A3(2) / M145).